The chain runs to 104 residues: Chromogranin-A (104 aa).

An intrachain disulfide couples C17 to C38.

This sequence belongs to the chromogranin/secretogranin protein family. Dimer.

The protein localises to the cytoplasmic vesicle. Its subcellular location is the secretory vesicle. It is found in the secreted. Its function is as follows. Chromogranin A probably has a paracrine role in the regulation of secretion or maturation. In Struthio camelus (Common ostrich), this protein is Chromogranin-A (CHGA).